Here is a 195-residue protein sequence, read N- to C-terminus: MAAWEWLSKPAPLVAPTLLGMVLVRQFADGLQVRAQIVETEAYTAGDPACHAYRRKTRRNQVMFGPPGHLYVYRIYGLYHCLNIVTEAEGIASAVLIRAAQLDCLPEWIPANKRLKPARVAAGPGLLCQALRIDGSHNGWRLEPVAAGQEGIWLEGSPAWEAQFPIVQTTRIGITRGVELPWRWYIKGHPAVSHY.

Belongs to the DNA glycosylase MPG family.

This Synechococcus sp. (strain JA-3-3Ab) (Cyanobacteria bacterium Yellowstone A-Prime) protein is Putative 3-methyladenine DNA glycosylase.